Reading from the N-terminus, the 226-residue chain is MSIRAIIVDTAGTTTDLNFIQDVLFPYSRKAMAEFLEQNQHNVVVDYCISDVKDIALEPDATLERVTEILQQWIDEDRKLTPLKTLQGLIWKQGYNRVEFTGHIYPDFIDSIERIKEKGIRIYSFSSGSVEAQKLLFSHTEAGDLTGSFNGHFDTRTGNKLDKQAYCNICNTISLKPKQILFVSDVAEELKAAEAAGMTTCQMIRFADQRQAKCKKISSFSELVFD.

Belongs to the HAD-like hydrolase superfamily. MasA/MtnC family. In terms of assembly, monomer. It depends on Mg(2+) as a cofactor.

The catalysed reaction is 5-methylsulfanyl-2,3-dioxopentyl phosphate + H2O = 1,2-dihydroxy-5-(methylsulfanyl)pent-1-en-3-one + phosphate. It participates in amino-acid biosynthesis; L-methionine biosynthesis via salvage pathway; L-methionine from S-methyl-5-thio-alpha-D-ribose 1-phosphate: step 3/6. The protein operates within amino-acid biosynthesis; L-methionine biosynthesis via salvage pathway; L-methionine from S-methyl-5-thio-alpha-D-ribose 1-phosphate: step 4/6. Its function is as follows. Bifunctional enzyme that catalyzes the enolization of 2,3-diketo-5-methylthiopentyl-1-phosphate (DK-MTP-1-P) into the intermediate 2-hydroxy-3-keto-5-methylthiopentenyl-1-phosphate (HK-MTPenyl-1-P), which is then dephosphorylated to form the acireductone 1,2-dihydroxy-3-keto-5-methylthiopentene (DHK-MTPene). The protein is Enolase-phosphatase E1 of Shewanella frigidimarina (strain NCIMB 400).